We begin with the raw amino-acid sequence, 363 residues long: DNA replication and repair protein RecF (363 aa).

30–37 contacts ATP; sequence GPNGSGKT.

Belongs to the RecF family.

The protein resides in the cytoplasm. The RecF protein is involved in DNA metabolism; it is required for DNA replication and normal SOS inducibility. RecF binds preferentially to single-stranded, linear DNA. It also seems to bind ATP. In Vibrio cholerae serotype O1 (strain ATCC 39541 / Classical Ogawa 395 / O395), this protein is DNA replication and repair protein RecF.